The following is a 374-amino-acid chain: Translocating chain-associated membrane protein 1 (374 aa).

The Cytoplasmic portion of the chain corresponds to A2–C29. Residues V30–F50 form a helical membrane-spanning segment. The Lumenal portion of the chain corresponds to V51–G76. N56 is a glycosylation site (N-linked (GlcNAc...) asparagine). A helical membrane pass occupies residues I77–I97. Residues Q98–E121 lie on the Cytoplasmic side of the membrane. The region spanning S117–H326 is the TLC domain. Residues S122–S142 traverse the membrane as a helical segment. At E143–N159 the chain is on the lumenal side. Residues L160–F180 form a helical membrane-spanning segment. The Cytoplasmic segment spans residues P181–D192. The helical transmembrane segment at I193–L213 threads the bilayer. At N214–H217 the chain is on the lumenal side. The chain crosses the membrane as a helical span at residues L218–L238. Residues F239 to S251 lie on the Cytoplasmic side of the membrane. Residues L252–V272 form a helical membrane-spanning segment. The Lumenal portion of the chain corresponds to G273–R297. A helical transmembrane segment spans residues I298–F318. Residues Q319 to S374 are Cytoplasmic-facing. Positions V334–R347 are enriched in basic residues. Residues V334 to S374 are disordered. Residues N352–A363 show a composition bias toward polar residues. S365 carries the post-translational modification Phosphoserine.

It belongs to the TRAM family. In terms of assembly, interacts with SEC61B. May interact with Derlin-1/DERL1. Post-translationally, N-glycosylated.

Its subcellular location is the endoplasmic reticulum membrane. Its function is as follows. Involved in the translocation of nascent protein chains into or through the endoplasmic reticulum (ER) membrane by facilitating the proper chain positioning at the SEC61 channel. Regulates the exposure of nascent secretory protein chain to the cytosol during translocation into the ER. May affect the phospholipid bilayer in the vicinity of the lateral gate of the SEC61 channel, thereby facilitating ER protein transport. Intimately associates with transmembrane (TM) domain of nascent membrane proteins during the entire integration process into the ER membrane. Associates with the second TM domain of G-protein-coupled receptor opsin/OPSD nascent chain in the ER membrane, which may facilitate its integration into the membrane. Under conditions of ER stress, participates in the disposal of misfolded ER membrane proteins during the unfolded protein response (UPR), an integrated stress response (ISR) pathway, by selectively retrotranslocating misfolded ER-membrane proteins from the ER into the cytosol where they are ubiquitinated and degraded by the proteasome. The chain is Translocating chain-associated membrane protein 1 (TRAM1) from Canis lupus familiaris (Dog).